We begin with the raw amino-acid sequence, 713 residues long: Metal transporter CNNM3 (713 aa).

A helical membrane pass occupies residues 7 to 29 (AVVGWLGWVLAAFCLGSTAGEAA). N-linked (GlcNAc...) asparagine glycosylation is present at Asn73. Positions 136–314 (EAAPPWALGL…DPYSDLSKGV (179 aa)) constitute a CNNM transmembrane domain. Helical transmembrane passes span 137-157 (AAPP…AAVA), 199-219 (CALG…AVLL), 227-247 (AVPA…VLPA), and 267-287 (LAVL…ELAA). CBS domains follow at residues 324 to 385 (LTPL…CTPL) and 392 to 458 (YNHP…ILDE). Residues 664 to 713 (LPPSPENAELQAIPGSQTRLLGDKSRETAGSTNSRPSIPVEESPGRNPGV) form a disordered region. 2 positions are modified to phosphoserine: Ser667 and Ser706.

The protein belongs to the ACDP family. Widely expressed with highest levels in brain, kidney, liver, lung and heart.

The protein resides in the cell membrane. Probable metal transporter. In Mus musculus (Mouse), this protein is Metal transporter CNNM3 (Cnnm3).